Reading from the N-terminus, the 141-residue chain is Large ribosomal subunit protein uL16 (141 aa).

Residues 1-21 (MLMPKRVKYRKQQRGHNRGMA) are disordered.

It belongs to the universal ribosomal protein uL16 family. In terms of assembly, part of the 50S ribosomal subunit.

Its function is as follows. Binds 23S rRNA and is also seen to make contacts with the A and possibly P site tRNAs. The protein is Large ribosomal subunit protein uL16 of Roseiflexus sp. (strain RS-1).